We begin with the raw amino-acid sequence, 443 residues long: Na(+)-translocating NADH-quinone reductase subunit A (443 aa).

It belongs to the NqrA family. As to quaternary structure, composed of six subunits; NqrA, NqrB, NqrC, NqrD, NqrE and NqrF.

The enzyme catalyses a ubiquinone + n Na(+)(in) + NADH + H(+) = a ubiquinol + n Na(+)(out) + NAD(+). NQR complex catalyzes the reduction of ubiquinone-1 to ubiquinol by two successive reactions, coupled with the transport of Na(+) ions from the cytoplasm to the periplasm. NqrA to NqrE are probably involved in the second step, the conversion of ubisemiquinone to ubiquinol. This is Na(+)-translocating NADH-quinone reductase subunit A from Actinobacillus succinogenes (strain ATCC 55618 / DSM 22257 / CCUG 43843 / 130Z).